Consider the following 205-residue polypeptide: Holliday junction branch migration complex subunit RuvA (205 aa).

The interval 1 to 65 (MIAKLKGILD…EDRIHLFGFL (65 aa)) is domain I. The tract at residues 66–144 (DNTEKVAFNM…NINTIANNTS (79 aa)) is domain II. The interval 145-153 (LAILSTDSN) is flexible linker. The segment at 154-205 (THDNILSDAITALIALGISRAEATQILSDIYALFPSISVNELVRTALQRRAK) is domain III.

The protein belongs to the RuvA family. In terms of assembly, homotetramer. Forms an RuvA(8)-RuvB(12)-Holliday junction (HJ) complex. HJ DNA is sandwiched between 2 RuvA tetramers; dsDNA enters through RuvA and exits via RuvB. An RuvB hexamer assembles on each DNA strand where it exits the tetramer. Each RuvB hexamer is contacted by two RuvA subunits (via domain III) on 2 adjacent RuvB subunits; this complex drives branch migration. In the full resolvosome a probable DNA-RuvA(4)-RuvB(12)-RuvC(2) complex forms which resolves the HJ.

The protein resides in the cytoplasm. Its function is as follows. The RuvA-RuvB-RuvC complex processes Holliday junction (HJ) DNA during genetic recombination and DNA repair, while the RuvA-RuvB complex plays an important role in the rescue of blocked DNA replication forks via replication fork reversal (RFR). RuvA specifically binds to HJ cruciform DNA, conferring on it an open structure. The RuvB hexamer acts as an ATP-dependent pump, pulling dsDNA into and through the RuvAB complex. HJ branch migration allows RuvC to scan DNA until it finds its consensus sequence, where it cleaves and resolves the cruciform DNA. The sequence is that of Holliday junction branch migration complex subunit RuvA from Orientia tsutsugamushi (strain Boryong) (Rickettsia tsutsugamushi).